A 493-amino-acid polypeptide reads, in one-letter code: Lysine--tRNA ligase (493 aa).

The Mg(2+) site is built by E406 and E413.

This sequence belongs to the class-II aminoacyl-tRNA synthetase family. In terms of assembly, homodimer. Mg(2+) serves as cofactor.

It localises to the cytoplasm. The catalysed reaction is tRNA(Lys) + L-lysine + ATP = L-lysyl-tRNA(Lys) + AMP + diphosphate. The chain is Lysine--tRNA ligase from Leuconostoc citreum (strain KM20).